We begin with the raw amino-acid sequence, 136 residues long: Large ribosomal subunit protein uL16 (136 aa).

This sequence belongs to the universal ribosomal protein uL16 family. Part of the 50S ribosomal subunit.

Functionally, binds 23S rRNA and is also seen to make contacts with the A and possibly P site tRNAs. This is Large ribosomal subunit protein uL16 from Orientia tsutsugamushi (strain Ikeda) (Rickettsia tsutsugamushi).